A 264-amino-acid chain; its full sequence is Undecaprenyl-diphosphatase (264 aa).

8 consecutive transmembrane segments (helical) span residues 7–27 (VVIL…SSGH), 39–59 (LPIV…MIYY), 89–109 (ILLI…IEMF), 112–132 (LFTL…LFLL), 145–165 (ILLA…PGIS), 182–202 (SESF…SLLL), 212–232 (MLFS…VGLF), and 244–264 (SKLY…YFLF).

The protein belongs to the UppP family.

Its subcellular location is the cell inner membrane. It catalyses the reaction di-trans,octa-cis-undecaprenyl diphosphate + H2O = di-trans,octa-cis-undecaprenyl phosphate + phosphate + H(+). Functionally, catalyzes the dephosphorylation of undecaprenyl diphosphate (UPP). Confers resistance to bacitracin. This chain is Undecaprenyl-diphosphatase, found in Borrelia hermsii (strain HS1 / DAH).